The primary structure comprises 297 residues: 33 kDa chaperonin (297 aa).

Intrachain disulfides connect Cys-239–Cys-241 and Cys-272–Cys-275.

Belongs to the HSP33 family. Under oxidizing conditions two disulfide bonds are formed involving the reactive cysteines. Under reducing conditions zinc is bound to the reactive cysteines and the protein is inactive.

The protein localises to the cytoplasm. Functionally, redox regulated molecular chaperone. Protects both thermally unfolding and oxidatively damaged proteins from irreversible aggregation. Plays an important role in the bacterial defense system toward oxidative stress. In Synechococcus elongatus (strain ATCC 33912 / PCC 7942 / FACHB-805) (Anacystis nidulans R2), this protein is 33 kDa chaperonin.